The following is a 715-amino-acid chain: Gelsolin, cytoplasmic (715 aa).

Residues 1–124 form an actin-severing region; that stretch reads MTTELEIQKA…YLIGGVASGF (124 aa). The Gelsolin-like 1 repeat unit spans residues 24-75; that stretch reads FELVPVPKTNHGKFYTGDSYIILKTTALESGRGFEWNLHYWQGKESSQDERG. The interval 72–75 is actin-actin interfilament contact point; it reads DERG. 136–145 is an a 1,2-diacyl-sn-glycero-3-phospho-(1D-myo-inositol-4,5-bisphosphate) binding site; that stretch reads KVLTRVKGKR. Gelsolin-like repeat units lie at residues 147–187, 260–306, and 405–451; these read VRAT…FEKN, LKIT…TERA, and LRKE…NERT. Residues 384-715 form an actin-binding, Ca-sensitive region; sequence AAESKMIDDG…FLGWDKTLWD (332 aa). Residues Gly421, Asp422, Glu449, Thr499, Asn539, Asp540, Glu562, Asp642, and Glu665 each contribute to the Ca(2+) site. Gelsolin-like repeat units lie at residues 524 to 564 and 625 to 667; these read CRAV…SEIQ and FIAE…EEKM.

The protein belongs to the villin/gelsolin family. Predominantly in the body wall muscle, but expression is not restricted to muscle cells.

It localises to the cytoplasm. The protein localises to the cytoskeleton. In terms of biological role, calcium-regulated, actin-modulating protein that binds to the plus (or barbed) ends of actin monomers or filaments, preventing monomer exchange (end-blocking or capping). It can promote the assembly of monomers into filaments (nucleation) as well as sever filaments already formed. The protein is Gelsolin, cytoplasmic of Halocynthia roretzi (Sea squirt).